We begin with the raw amino-acid sequence, 82 residues long: Exodeoxyribonuclease 7 small subunit (82 aa).

It belongs to the XseB family. As to quaternary structure, heterooligomer composed of large and small subunits.

Its subcellular location is the cytoplasm. It carries out the reaction Exonucleolytic cleavage in either 5'- to 3'- or 3'- to 5'-direction to yield nucleoside 5'-phosphates.. In terms of biological role, bidirectionally degrades single-stranded DNA into large acid-insoluble oligonucleotides, which are then degraded further into small acid-soluble oligonucleotides. The polypeptide is Exodeoxyribonuclease 7 small subunit (Sodalis glossinidius (strain morsitans)).